The following is a 386-amino-acid chain: Succinate--CoA ligase [ADP-forming] subunit beta (386 aa).

In terms of domain architecture, ATP-grasp spans 9–244; the sequence is KDILRQFGVP…LDEEDPAEVE (236 aa). ATP contacts are provided by residues Lys-46, 53 to 55, Glu-99, Ala-102, and Glu-107; that span reads GRG. Mg(2+) contacts are provided by Asn-199 and Asp-213. Residues Asn-264 and 321-323 contribute to the substrate site; that span reads GIM.

It belongs to the succinate/malate CoA ligase beta subunit family. As to quaternary structure, heterotetramer of two alpha and two beta subunits. Mg(2+) is required as a cofactor.

The enzyme catalyses succinate + ATP + CoA = succinyl-CoA + ADP + phosphate. The catalysed reaction is GTP + succinate + CoA = succinyl-CoA + GDP + phosphate. It functions in the pathway carbohydrate metabolism; tricarboxylic acid cycle; succinate from succinyl-CoA (ligase route): step 1/1. Its function is as follows. Succinyl-CoA synthetase functions in the citric acid cycle (TCA), coupling the hydrolysis of succinyl-CoA to the synthesis of either ATP or GTP and thus represents the only step of substrate-level phosphorylation in the TCA. The beta subunit provides nucleotide specificity of the enzyme and binds the substrate succinate, while the binding sites for coenzyme A and phosphate are found in the alpha subunit. The polypeptide is Succinate--CoA ligase [ADP-forming] subunit beta (Delftia acidovorans (strain DSM 14801 / SPH-1)).